The following is a 345-amino-acid chain: N-acetyl-gamma-glutamyl-phosphate reductase (345 aa).

Residue cysteine 149 is part of the active site.

The protein belongs to the NAGSA dehydrogenase family. Type 1 subfamily.

The protein resides in the cytoplasm. It carries out the reaction N-acetyl-L-glutamate 5-semialdehyde + phosphate + NADP(+) = N-acetyl-L-glutamyl 5-phosphate + NADPH + H(+). The protein operates within amino-acid biosynthesis; L-arginine biosynthesis; N(2)-acetyl-L-ornithine from L-glutamate: step 3/4. Its function is as follows. Catalyzes the NADPH-dependent reduction of N-acetyl-5-glutamyl phosphate to yield N-acetyl-L-glutamate 5-semialdehyde. The chain is N-acetyl-gamma-glutamyl-phosphate reductase from Bacillus cereus (strain AH187).